The primary structure comprises 402 residues: Uroporphyrinogen decarboxylase 1, chloroplastic (402 aa).

Residues 1–50 (MISATATAAFLAAAPASSSSCTTHRRRSGLPAISASLATASSTEEPLLVR) constitute a chloroplast transit peptide. Substrate contacts are provided by residues 67–71 (RQAGR), Phe-86, Ser-116, Asp-117, Tyr-193, Ser-248, and His-363.

Belongs to the uroporphyrinogen decarboxylase family. As to quaternary structure, homodimer.

Its subcellular location is the plastid. The protein localises to the chloroplast. The enzyme catalyses uroporphyrinogen III + 4 H(+) = coproporphyrinogen III + 4 CO2. The protein operates within porphyrin-containing compound metabolism; protoporphyrin-IX biosynthesis; coproporphyrinogen-III from 5-aminolevulinate: step 4/4. Catalyzes the decarboxylation of four acetate groups of uroporphyrinogen-III to yield coproporphyrinogen-III. This Oryza sativa subsp. japonica (Rice) protein is Uroporphyrinogen decarboxylase 1, chloroplastic.